We begin with the raw amino-acid sequence, 302 residues long: Sulfate adenylyltransferase subunit 2 (302 aa).

The protein belongs to the PAPS reductase family. CysD subfamily. In terms of assembly, heterodimer composed of CysD, the smaller subunit, and CysN.

It catalyses the reaction sulfate + ATP + H(+) = adenosine 5'-phosphosulfate + diphosphate. Its pathway is sulfur metabolism; hydrogen sulfide biosynthesis; sulfite from sulfate: step 1/3. In terms of biological role, with CysN forms the ATP sulfurylase (ATPS) that catalyzes the adenylation of sulfate producing adenosine 5'-phosphosulfate (APS) and diphosphate, the first enzymatic step in sulfur assimilation pathway. APS synthesis involves the formation of a high-energy phosphoric-sulfuric acid anhydride bond driven by GTP hydrolysis by CysN coupled to ATP hydrolysis by CysD. The polypeptide is Sulfate adenylyltransferase subunit 2 (Bacteroides thetaiotaomicron (strain ATCC 29148 / DSM 2079 / JCM 5827 / CCUG 10774 / NCTC 10582 / VPI-5482 / E50)).